Reading from the N-terminus, the 260-residue chain is Proteasome subunit alpha (260 aa).

The tract at residues 241 to 260 (VEAEEVPEKEEDYSELDSNY) is disordered. Positions 242-260 (EAEEVPEKEEDYSELDSNY) are enriched in acidic residues.

Belongs to the peptidase T1A family. The 20S proteasome core is composed of 14 alpha and 14 beta subunits that assemble into four stacked heptameric rings, resulting in a barrel-shaped structure. The two inner rings, each composed of seven catalytic beta subunits, are sandwiched by two outer rings, each composed of seven alpha subunits. The catalytic chamber with the active sites is on the inside of the barrel. Has a gated structure, the ends of the cylinder being occluded by the N-termini of the alpha-subunits. Is capped at one or both ends by the proteasome regulatory ATPase, PAN.

It localises to the cytoplasm. The formation of the proteasomal ATPase PAN-20S proteasome complex, via the docking of the C-termini of PAN into the intersubunit pockets in the alpha-rings, triggers opening of the gate for substrate entry. Interconversion between the open-gate and close-gate conformations leads to a dynamic regulation of the 20S proteasome proteolysis activity. Component of the proteasome core, a large protease complex with broad specificity involved in protein degradation. The polypeptide is Proteasome subunit alpha (Thermococcus sibiricus (strain DSM 12597 / MM 739)).